The chain runs to 184 residues: NADH-quinone oxidoreductase subunit B (184 aa).

[4Fe-4S] cluster is bound by residues Cys37, Cys38, Cys103, and Cys132.

Belongs to the complex I 20 kDa subunit family. In terms of assembly, NDH-1 is composed of 14 different subunits. Subunits NuoB, C, D, E, F, and G constitute the peripheral sector of the complex. [4Fe-4S] cluster serves as cofactor.

Its subcellular location is the cell membrane. The catalysed reaction is a quinone + NADH + 5 H(+)(in) = a quinol + NAD(+) + 4 H(+)(out). Its function is as follows. NDH-1 shuttles electrons from NADH, via FMN and iron-sulfur (Fe-S) centers, to quinones in the respiratory chain. The immediate electron acceptor for the enzyme in this species is believed to be a menaquinone. Couples the redox reaction to proton translocation (for every two electrons transferred, four hydrogen ions are translocated across the cytoplasmic membrane), and thus conserves the redox energy in a proton gradient. The chain is NADH-quinone oxidoreductase subunit B from Mycolicibacterium paratuberculosis (strain ATCC BAA-968 / K-10) (Mycobacterium paratuberculosis).